We begin with the raw amino-acid sequence, 157 residues long: SsrA-binding protein (157 aa).

Residues 134 to 151 (HDKRETEKKRDWSKEKGR) show a composition bias toward basic and acidic residues. The disordered stretch occupies residues 134 to 157 (HDKRETEKKRDWSKEKGRLMRAKG).

This sequence belongs to the SmpB family.

The protein localises to the cytoplasm. Required for rescue of stalled ribosomes mediated by trans-translation. Binds to transfer-messenger RNA (tmRNA), required for stable association of tmRNA with ribosomes. tmRNA and SmpB together mimic tRNA shape, replacing the anticodon stem-loop with SmpB. tmRNA is encoded by the ssrA gene; the 2 termini fold to resemble tRNA(Ala) and it encodes a 'tag peptide', a short internal open reading frame. During trans-translation Ala-aminoacylated tmRNA acts like a tRNA, entering the A-site of stalled ribosomes, displacing the stalled mRNA. The ribosome then switches to translate the ORF on the tmRNA; the nascent peptide is terminated with the 'tag peptide' encoded by the tmRNA and targeted for degradation. The ribosome is freed to recommence translation, which seems to be the essential function of trans-translation. The polypeptide is SsrA-binding protein (Rhodopseudomonas palustris (strain BisA53)).